The following is a 277-amino-acid chain: Large ribosomal subunit protein uL2 (277 aa).

Disordered stretches follow at residues 1 to 55 and 217 to 277; these read MGIR…RHQG and KRPS…KKKR. Basic residues predominate over residues 37–55; sequence LHSKGGRNGHGRITARHQG.

It belongs to the universal ribosomal protein uL2 family. In terms of assembly, part of the 50S ribosomal subunit. Forms a bridge to the 30S subunit in the 70S ribosome.

One of the primary rRNA binding proteins. Required for association of the 30S and 50S subunits to form the 70S ribosome, for tRNA binding and peptide bond formation. It has been suggested to have peptidyltransferase activity; this is somewhat controversial. Makes several contacts with the 16S rRNA in the 70S ribosome. This is Large ribosomal subunit protein uL2 from Thermobifida fusca (strain YX).